A 110-amino-acid polypeptide reads, in one-letter code: Large ribosomal subunit protein uL22 (110 aa).

It belongs to the universal ribosomal protein uL22 family. Part of the 50S ribosomal subunit.

This protein binds specifically to 23S rRNA; its binding is stimulated by other ribosomal proteins, e.g. L4, L17, and L20. It is important during the early stages of 50S assembly. It makes multiple contacts with different domains of the 23S rRNA in the assembled 50S subunit and ribosome. Functionally, the globular domain of the protein is located near the polypeptide exit tunnel on the outside of the subunit, while an extended beta-hairpin is found that lines the wall of the exit tunnel in the center of the 70S ribosome. The chain is Large ribosomal subunit protein uL22 from Pseudomonas savastanoi pv. phaseolicola (strain 1448A / Race 6) (Pseudomonas syringae pv. phaseolicola (strain 1448A / Race 6)).